A 265-amino-acid chain; its full sequence is Hydroxyethylthiazole kinase (265 aa).

M43 contributes to the substrate binding site. R119 and S165 together coordinate ATP. Substrate is bound at residue A192.

Belongs to the Thz kinase family. Requires Mg(2+) as cofactor.

It carries out the reaction 5-(2-hydroxyethyl)-4-methylthiazole + ATP = 4-methyl-5-(2-phosphooxyethyl)-thiazole + ADP + H(+). It participates in cofactor biosynthesis; thiamine diphosphate biosynthesis; 4-methyl-5-(2-phosphoethyl)-thiazole from 5-(2-hydroxyethyl)-4-methylthiazole: step 1/1. In terms of biological role, catalyzes the phosphorylation of the hydroxyl group of 4-methyl-5-beta-hydroxyethylthiazole (THZ). This chain is Hydroxyethylthiazole kinase, found in Haemophilus influenzae (strain ATCC 51907 / DSM 11121 / KW20 / Rd).